The chain runs to 1093 residues: Isoleucine--tRNA ligase, chloroplastic/mitochondrial (1093 aa).

The segment at 69–103 is disordered; sequence PNNEFGHSSKRRSRGPVMAAKKASEGEKQEDGKYK. Positions 90-103 are enriched in basic and acidic residues; sequence KASEGEKQEDGKYK. The 'HIGH' region signature appears at 155 to 165; sequence PYANGDLHMGH. Glu682 is a binding site for L-isoleucyl-5'-AMP. The 'KMSKS' region signature appears at 723 to 727; the sequence is KMSKS. Lys726 contributes to the ATP binding site. Positions 1050, 1053, 1070, and 1073 each coordinate Zn(2+).

Belongs to the class-I aminoacyl-tRNA synthetase family.

The protein localises to the plastid. It is found in the chloroplast. Its subcellular location is the mitochondrion. It catalyses the reaction tRNA(Ile) + L-isoleucine + ATP = L-isoleucyl-tRNA(Ile) + AMP + diphosphate. The chain is Isoleucine--tRNA ligase, chloroplastic/mitochondrial from Arabidopsis thaliana (Mouse-ear cress).